A 500-amino-acid polypeptide reads, in one-letter code: AAA-ATPase At3g28580 (500 aa).

Residues 7–29 traverse the membrane as a helical segment; sequence LWTNTGSALATLMFVYTIFKQFF. The disordered stretch occupies residues 174-193; it reads NRERKLYSNTPGQSHGNNSK. Positions 180–193 are enriched in polar residues; sequence YSNTPGQSHGNNSK. 247–254 is an ATP binding site; that stretch reads GPPGTGKS. A disordered region spans residues 462 to 500; it reads KEEAKKKVEEEEEEKQRKKEKVKEIEAEKEKKKKIEEEN.

The protein belongs to the AAA ATPase family. BCS1 subfamily. It depends on Mg(2+) as a cofactor.

The protein localises to the membrane. The enzyme catalyses ATP + H2O = ADP + phosphate + H(+). In Arabidopsis thaliana (Mouse-ear cress), this protein is AAA-ATPase At3g28580.